A 605-amino-acid polypeptide reads, in one-letter code: Isocitrate dehydrogenase kinase/phosphatase (605 aa).

ATP contacts are provided by residues 353–359 and Lys-374; that span reads APGFKGT. Residue Asp-413 is part of the active site.

The protein belongs to the AceK family.

It is found in the cytoplasm. The enzyme catalyses L-seryl-[isocitrate dehydrogenase] + ATP = O-phospho-L-seryl-[isocitrate dehydrogenase] + ADP + H(+). In terms of biological role, bifunctional enzyme which can phosphorylate or dephosphorylate isocitrate dehydrogenase (IDH) on a specific serine residue. This is a regulatory mechanism which enables bacteria to bypass the Krebs cycle via the glyoxylate shunt in response to the source of carbon. When bacteria are grown on glucose, IDH is fully active and unphosphorylated, but when grown on acetate or ethanol, the activity of IDH declines drastically concomitant with its phosphorylation. The chain is Isocitrate dehydrogenase kinase/phosphatase from Rhodopseudomonas palustris (strain HaA2).